A 208-amino-acid chain; its full sequence is Uracil phosphoribosyltransferase (208 aa).

Residues arginine 78, arginine 103, and aspartate 130–serine 138 each bind 5-phospho-alpha-D-ribose 1-diphosphate. Uracil is bound by residues isoleucine 193 and glycine 198–alanine 200. Residue aspartate 199 coordinates 5-phospho-alpha-D-ribose 1-diphosphate.

The protein belongs to the UPRTase family. The cofactor is Mg(2+).

The enzyme catalyses UMP + diphosphate = 5-phospho-alpha-D-ribose 1-diphosphate + uracil. It participates in pyrimidine metabolism; UMP biosynthesis via salvage pathway; UMP from uracil: step 1/1. With respect to regulation, allosterically activated by GTP. Catalyzes the conversion of uracil and 5-phospho-alpha-D-ribose 1-diphosphate (PRPP) to UMP and diphosphate. The sequence is that of Uracil phosphoribosyltransferase from Aliivibrio salmonicida (strain LFI1238) (Vibrio salmonicida (strain LFI1238)).